The primary structure comprises 302 residues: Orotidine 5'-phosphate decarboxylase (302 aa).

The Proton donor role is filled by Lys105.

This sequence belongs to the OMP decarboxylase family. Type 2 subfamily.

It carries out the reaction orotidine 5'-phosphate + H(+) = UMP + CO2. It functions in the pathway pyrimidine metabolism; UMP biosynthesis via de novo pathway; UMP from orotate: step 2/2. This chain is Orotidine 5'-phosphate decarboxylase, found in Rhodopirellula baltica (strain DSM 10527 / NCIMB 13988 / SH1).